A 389-amino-acid polypeptide reads, in one-letter code: WAT1-related protein At1g21890 (389 aa).

10 helical membrane passes run L13–L33, Y40–F60, I73–Y93, T102–F122, V142–I162, W191–L211, L225–V245, F260–V280, V287–V307, and I312–W332. EamA domains are found at residues A23–L150 and W205–V331. Residues R339–T361 form a disordered region.

This sequence belongs to the drug/metabolite transporter (DMT) superfamily. Plant drug/metabolite exporter (P-DME) (TC 2.A.7.4) family.

The protein localises to the membrane. The chain is WAT1-related protein At1g21890 from Arabidopsis thaliana (Mouse-ear cress).